Here is a 133-residue protein sequence, read N- to C-terminus: Protein Ac75 (133 aa).

As to quaternary structure, interacts with protein Ac76.

It localises to the virion. Its subcellular location is the host cytoplasm. The protein localises to the host nucleus. In terms of biological role, plays a role in nuclear egress of nucleocapsids and intranuclear microvesicle formation. This is Protein Ac75 (Ac75) from Lepidoptera (butterflies and moths).